Here is a 1378-residue protein sequence, read N- to C-terminus: DNA-directed RNA polymerase subunit beta (1378 aa).

Belongs to the RNA polymerase beta chain family. The RNAP catalytic core consists of 2 alpha, 1 beta, 1 beta' and 1 omega subunit. When a sigma factor is associated with the core the holoenzyme is formed, which can initiate transcription.

The enzyme catalyses RNA(n) + a ribonucleoside 5'-triphosphate = RNA(n+1) + diphosphate. Its function is as follows. DNA-dependent RNA polymerase catalyzes the transcription of DNA into RNA using the four ribonucleoside triphosphates as substrates. This chain is DNA-directed RNA polymerase subunit beta, found in Roseobacter denitrificans (strain ATCC 33942 / OCh 114) (Erythrobacter sp. (strain OCh 114)).